The primary structure comprises 516 residues: Probable serine/threonine-protein kinase WNK3 (516 aa).

The 259-residue stretch at 22–280 (GRYKEVLGKG…AKELLDDPFL (259 aa)) folds into the Protein kinase domain. ATP-binding positions include 102–105 (TEVF) and lysine 152. Aspartate 169 serves as the catalytic Proton acceptor. The interval 426–451 (SSPKAGAGDSRSPFAPRSNSKLSSAQ) is disordered. Polar residues predominate over residues 442-451 (RSNSKLSSAQ). A coiled-coil region spans residues 457–490 (EVGVIVEKLESLLRKQREEIEEMQRDQERIVTEF).

Belongs to the protein kinase superfamily. Ser/Thr protein kinase family. WNK subfamily.

The enzyme catalyses L-seryl-[protein] + ATP = O-phospho-L-seryl-[protein] + ADP + H(+). It catalyses the reaction L-threonyl-[protein] + ATP = O-phospho-L-threonyl-[protein] + ADP + H(+). In terms of biological role, may regulate flowering time by modulating the photoperiod pathway. This Arabidopsis thaliana (Mouse-ear cress) protein is Probable serine/threonine-protein kinase WNK3 (WNK3).